The following is a 152-amino-acid chain: Succinate dehydrogenase [ubiquinone] cytochrome b small subunit B, mitochondrial (152 aa).

Residues 1–21 (MATLLRVSSLCRANRASAFKS) constitute a mitochondrion transit peptide. The Mitochondrial matrix segment spans residues 22 to 56 (LLIRPLPCLSQDLHMVQTSQIHTSPNHHAGSKAAS). The helical transmembrane segment at 57-78 (MHWTGERALSVALLGLLPAAYL) threads the bilayer. The Mitochondrial intermembrane segment spans residues 79-83 (YPGAA). A helical transmembrane segment spans residues 84–104 (MDYSLAAALTLHGHWGLGQVV). H95 serves as a coordination point for heme b. Over 105 to 113 (TDYVHGETK) the chain is Mitochondrial matrix. A ubiquinone is bound at residue Y107. The chain crosses the membrane as a helical span at residues 114-135 (IKMANTSLFALSALTFAGLCYF). Residues 136–152 (NYHDVGICKAVAMLWSL) lie on the Mitochondrial intermembrane side of the membrane.

This sequence belongs to the CybS family. In terms of assembly, component of complex II composed of four subunits: the flavoprotein (FP) SDHA, iron-sulfur protein (IP) SDHB, and a cytochrome b560 composed of SDHC and SDHD.

Its subcellular location is the mitochondrion inner membrane. It participates in carbohydrate metabolism; tricarboxylic acid cycle. Membrane-anchoring subunit of succinate dehydrogenase (SDH) that is involved in complex II of the mitochondrial electron transport chain and is responsible for transferring electrons from succinate to ubiquinone (coenzyme Q). SDH also oxidizes malate to the non-canonical enol form of oxaloacetate, enol-oxaloacetate. Enol-oxaloacetate, which is a potent inhibitor of the succinate dehydrogenase activity, is further isomerized into keto-oxaloacetate. This is Succinate dehydrogenase [ubiquinone] cytochrome b small subunit B, mitochondrial (sdhd-b) from Xenopus laevis (African clawed frog).